The following is a 353-amino-acid chain: uncharacterized protein (353 aa).

An N-terminal signal peptide occupies residues 1–28; the sequence is MHLTIMRRFAVLLLLAIFLGGCSGSNGA.

This is an uncharacterized protein from Archaeoglobus fulgidus (strain ATCC 49558 / DSM 4304 / JCM 9628 / NBRC 100126 / VC-16).